A 129-amino-acid polypeptide reads, in one-letter code: Chorion class A protein L11 (129 aa).

The first 21 residues, 1–21, serve as a signal peptide directing secretion; sequence MSTFAFLLLCVQACLIQNVYG. The tract at residues 22–64 is left arm; the sequence is QCLGRGLGGCGCGGGLGGYGLGYGLGGYGGGYGYGGYGGGYYG. The interval 65–112 is central domain; sequence GYGGEGVGNVGVAGVLPVGGVTAVGGRVPIIGGVEFGGPACAGGCVSI. A right arm region spans residues 113–129; the sequence is CGHCAPTCGCGYGGLYY.

The protein belongs to the chorion protein family.

This protein is one of many from the eggshell of the silk moth. The protein is Chorion class A protein L11 of Bombyx mori (Silk moth).